The following is an 880-amino-acid chain: MKIEEVKVYNFRSHEETVVRFRKGINLIIGQNGSGKSSLLDAILVGLYWSKKLRLRGLKKDEFRRIGGKGGTRIEIKFENDDSKYVLFRDFSRNVAYLKVQENGKWRHASEPSMESVSSYIERILPYNVFLNAIYIRQGQIDAILESDETRDKVVREILNLDKLESAYENLKRIKTNINLLIESKKSFIARTENIEELIKANEDELTKKLSEINEISSKLPPIRGELEKVRENVKELESIKGKISELKIQVEKLKGRKKGLEEKIVQIERSIEEKKAKISELEEIVKDIPKLQEKEKEYRKLKGFRDEYESKLRRLEKELSKWESELKAIEEVIKEGEKKKERAEEIREKLSEIEKRLEELKPYVEELEDAKQVQKQIERLKARLKGLSPGEVIEKLESLEKERTEIEEAIKEITTRIGQMEQEKNERMKAIEELRKAKGKCPVCGRELTEEHKKELMERYTLEIKKIEEELKRTTEEERKLRVNLRKLEIKLREFSVMRDIAEQIKELESKLKGFNLEELEQKEREFEGLNEEFNKLKGELLGLERDLKRIKALEGRRKLIEEKVRKAKEELENLHRQLRELGFESVEELNLRIQELEEFHDKYVEAKKSESELRELKNKLEKEKTELDQAFEMLADVENEIEEKEAKLKDLESKFNEEEYEEKRERLVKLEREVSSLTARLEELKKSVEQIKATLRKLKEEKEEREKAKLEIKKLEKALSKVEDLRKKIKDYKTLAKEQALNRISEIASEIFSEFTDGKYSNVIVRAEENKTKLFVVYEGKEVPLTFLSGGERIALGLAFRLALSMYLVGRIDLLILDEPTPFLDEERRRKLLDIMERHLRRISQVIMVSHDEELKDAADYVIRLRLEGGKSKVEVVS.

ATP is bound by residues Arg12, 32–38 (NGSGKSS), and Gln138. Coiled-coil stretches lie at residues 225–336 (GELE…VIKE) and 391–744 (GEVI…QALN). The Zinc-hook domain maps to 397–494 (LESLEKERTE…NLRKLEIKLR (98 aa)). Cys442 and Cys445 together coordinate Zn(2+). Position 789 to 794 (789 to 794 (FLSGGE)) interacts with ATP.

It belongs to the SMC family. RAD50 subfamily. Homodimer. Forms a heterotetramer composed of two Mre11 subunits and two Rad50 subunits. The cofactor is Zn(2+).

Its function is as follows. Part of the Rad50/Mre11 complex, which is involved in the early steps of DNA double-strand break (DSB) repair. The complex may facilitate opening of the processed DNA ends to aid in the recruitment of HerA and NurA. Rad50 controls the balance between DNA end bridging and DNA resection via ATP-dependent structural rearrangements of the Rad50/Mre11 complex. This Pyrococcus abyssi (strain GE5 / Orsay) protein is DNA double-strand break repair Rad50 ATPase.